Consider the following 487-residue polypeptide: Signal recognition particle subunit SRP54 (487 aa).

The interval 1–295 (MVLSQLGSSL…DAESFVRKLL (295 aa)) is G-domain. GTP is bound by residues 108–115 (GLQGAGKT), 190–194 (DTSGR), and 248–251 (TKLD). The interval 296–487 (GMGDLKGIAK…LGGTGKKGKK (192 aa)) is M-domain.

It belongs to the GTP-binding SRP family. SRP54 subfamily. In terms of assembly, component of a signal recognition particle (SRP) complex that consists of a 7SL RNA molecule of 300 nucleotides and six protein subunits: SRP72, SRP68, SRP54, SRP19, SRP14 and SRP9.

It localises to the cytoplasm. It is found in the endoplasmic reticulum. The catalysed reaction is GTP + H2O = GDP + phosphate + H(+). In terms of biological role, component of the signal recognition particle (SRP) complex, a ribonucleoprotein complex that mediates the cotranslational targeting of secretory and membrane proteins to the endoplasmic reticulum (ER). As part of the SRP complex, associates with the SRP receptor (SR) component SRPRA to target secretory proteins to the endoplasmic reticulum membrane. Binds to the signal sequence of presecretory proteins when they emerge from the ribosomes. Displays basal GTPase activity, and stimulates reciprocal GTPase activation of the SR subunit SRPRA. Forms a guanosine 5'-triphosphate (GTP)-dependent complex with the SR subunit SRPRA. SR compaction and GTPase mediated rearrangement of SR drive SRP-mediated cotranslational protein translocation into the ER. Requires the presence of SRP9/SRP14 and/or SRP19 to stably interact with RNA. In Entamoeba histolytica (strain ATCC 30459 / HM-1:IMSS / ABRM), this protein is Signal recognition particle subunit SRP54.